The sequence spans 888 residues: Glutamate receptor 3 (888 aa).

An N-terminal signal peptide occupies residues 1 to 22; that stretch reads MGQSVLRAVFFLVLGLLGHSHG. At 23-546 the chain is on the extracellular side; the sequence is GFPNTISIGG…GVFSFLDPLA (524 aa). Residues asparagine 57, asparagine 260, asparagine 374, asparagine 409, and asparagine 416 are each glycosylated (N-linked (GlcNAc...) asparagine). An intrachain disulfide couples cysteine 85 to cysteine 334. L-glutamate contacts are provided by proline 502, threonine 504, and arginine 509. A helical membrane pass occupies residues 547 to 567; that stretch reads YEIWMCIVFAYIGVSVVLFLV. Over 568–596 the chain is Cytoplasmic; that stretch reads SRFSPYEWHLEDNNEEPRDPQSPPDPPNE. The helical; Pore-forming intramembrane region spans 597 to 612; it reads FGIFNSLWFSLGAFMQ. An intramembrane segment occupies 613–615; that stretch reads QGC. Cysteine 615 carries S-palmitoyl cysteine lipidation. The Cytoplasmic portion of the chain corresponds to 616 to 621; it reads DISPRS. A helical transmembrane segment spans residues 622–642; sequence LSGRIVGGVWWFFTLIIISSY. Over 643 to 817 the chain is Extracellular; the sequence is TANLAAFLTV…DKTSALSLSN (175 aa). Residues serine 680, threonine 681, and glutamate 731 each coordinate L-glutamate. Cysteines 744 and 799 form a disulfide. A helical transmembrane segment spans residues 818–838; it reads VAGVFYILVGGLGLAMMVALI. The Cytoplasmic segment spans residues 839-888; that stretch reads EFCYKSRAESKRMKLTKNTQNFKPAPATNTQNYATYREGYNVYGTESVKI. The S-palmitoyl cysteine moiety is linked to residue cysteine 841. Residues tyrosine 871 and tyrosine 881 each carry the phosphotyrosine modification.

It belongs to the glutamate-gated ion channel (TC 1.A.10.1) family. GRIA3 subfamily. In terms of assembly, homotetramer or heterotetramer of pore-forming glutamate receptor subunits. Tetramers may be formed by the dimerization of dimers. Interacts with PICK1, GRIP1 and GRIP2. Found in a complex with GRIA1, GRIA2, GRIA4, CNIH2, CNIH3, CACNG2, CACNG3, CACNG4, CACNG5, CACNG7 and CACNG8. Interacts with CACNG5. Found in a complex with GRIA1, GRIA2, GRIA4, DLG4, CACNG8 and CNIH2.

Its subcellular location is the cell membrane. It localises to the postsynaptic cell membrane. The protein localises to the postsynaptic density membrane. The enzyme catalyses Ca(2+)(in) = Ca(2+)(out). Functionally, ionotropic glutamate receptor that functions as a ligand-gated cation channel, gated by L-glutamate and glutamatergic agonists such as alpha-amino-3-hydroxy-5-methyl-4-isoxazolepropionic acid (AMPA), quisqualic acid, and kainic acid. L-glutamate acts as an excitatory neurotransmitter at many synapses in the central nervous system and plays an important role in fast excitatory synaptic transmission by inducing long-term potentiation. Binding of the excitatory neurotransmitter L-glutamate induces a conformation change, leading to the opening of the cation channel, and thereby converts the chemical signal to an electrical impulse upon entry of calcium. The receptor then desensitizes rapidly and enters a transient inactive state, characterized by the presence of bound agonist. In the presence of CACNG8, shows resensitization which is characterized by a delayed accumulation of current flux upon continued application of glutamate. This chain is Glutamate receptor 3, found in Mus musculus (Mouse).